Here is a 418-residue protein sequence, read N- to C-terminus: Hepatic and glial cell adhesion molecule (418 aa).

Positions 1-33 (MKRERGALSRASRALRLSPFVYLLLIQPVPLEG) are cleaved as a signal peptide. In terms of domain architecture, Ig-like V-type spans 34 to 142 (VNITSPVRLI…GEKTINLTVD (109 aa)). Residues 34–240 (VNITSPVRLI…VKITVYRRSS (207 aa)) lie on the Extracellular side of the membrane. N-linked (GlcNAc...) asparagine glycans are attached at residues asparagine 35, asparagine 138, asparagine 167, and asparagine 189. Residues 148-234 (PQVLVASTTV…QVRSLPVKIT (87 aa)) form the Ig-like C2-type domain. Cysteines 168 and 217 form a disulfide. A helical membrane pass occupies residues 241-261 (LYIILSTGGIFLLVTLVTVCA). Residues 262 to 418 (CWKPSKKSRK…DESGQVEISA (157 aa)) lie on the Cytoplasmic side of the membrane. Positions 271-418 (KKRKLEKQNS…DESGQVEISA (148 aa)) are disordered. At serine 280 the chain carries Phosphoserine. The segment covering 287–308 (NDDRLKSEADTLPRSGEQERKN) has biased composition (basic and acidic residues). 3 positions are modified to phosphoserine: serine 321, serine 352, and serine 379. Over residues 341-358 (GYSVSPPVPGRSPGLPIR) the composition is skewed to low complexity. Residues 385 to 396 (SSPGRSRSSSRS) show a composition bias toward low complexity.

As to quaternary structure, homodimer. Dimer formation occurs predominantly through cis interactions on the cell surface. Part of a complex containing MLC1, TRPV4, AQP4 and ATP1B1. Interacts with CLCN2. In terms of processing, N-glycosylated.

The protein resides in the cytoplasm. It localises to the cell membrane. Involved in regulating cell motility and cell-matrix interactions. May inhibit cell growth through suppression of cell proliferation. In glia, associates and targets CLCN2 at astrocytic processes and myelinated fiber tracts where it may regulate transcellular chloride flux involved in neuron excitability. The protein is Hepatic and glial cell adhesion molecule of Mus musculus (Mouse).